Here is a 244-residue protein sequence, read N- to C-terminus: MSVESRVLVVDAGNTSIKFTAFEGEQVLWVLRGDSCPAETDFAPQVIYFASVRSKEQSALLHADVQAAFPSSEWITLTSQATACCVRNAYIEPERLGIDRWLGVVAAHHLIKGNVVVVDAGTAIKVDVVNSEGAHLGGYIAPGLAMMTESLLSKTARIRFDSHEVVEGEGLPNSTARAVTEGCHEMALGFLERIHHLYPEFKWVVTGGDAQALLNRLGIALECFPNLVALGAKLVGDEQLRGNK.

11–18 is a binding site for ATP; the sequence is DAGNTSIK. Substrate-binding positions include tyrosine 90 and 97–100; that span reads GIDR. The Proton acceptor role is filled by aspartate 99. Residue aspartate 119 participates in K(+) binding. Threonine 122 is an ATP binding site. Threonine 175 contacts substrate.

Belongs to the type III pantothenate kinase family. Homodimer. NH4(+) serves as cofactor. The cofactor is K(+).

It localises to the cytoplasm. The catalysed reaction is (R)-pantothenate + ATP = (R)-4'-phosphopantothenate + ADP + H(+). It functions in the pathway cofactor biosynthesis; coenzyme A biosynthesis; CoA from (R)-pantothenate: step 1/5. Its function is as follows. Catalyzes the phosphorylation of pantothenate (Pan), the first step in CoA biosynthesis. The polypeptide is Type III pantothenate kinase (Marinomonas sp. (strain MWYL1)).